We begin with the raw amino-acid sequence, 294 residues long: Pyridoxal 5'-phosphate synthase subunit PdxS (294 aa).

D24 serves as a coordination point for D-ribose 5-phosphate. K81 acts as the Schiff-base intermediate with D-ribose 5-phosphate in catalysis. G153 provides a ligand contact to D-ribose 5-phosphate. D-glyceraldehyde 3-phosphate is bound at residue R165. D-ribose 5-phosphate-binding positions include G214 and 235-236 (GS).

It belongs to the PdxS/SNZ family. In terms of assembly, homohexamer and homododecamer. In the presence of PdxT, forms a dodecamer of heterodimers.

It catalyses the reaction aldehydo-D-ribose 5-phosphate + D-glyceraldehyde 3-phosphate + L-glutamine = pyridoxal 5'-phosphate + L-glutamate + phosphate + 3 H2O + H(+). It functions in the pathway cofactor biosynthesis; pyridoxal 5'-phosphate biosynthesis. Its function is as follows. Catalyzes the formation of pyridoxal 5'-phosphate from ribose 5-phosphate (RBP), glyceraldehyde 3-phosphate (G3P) and ammonia. The ammonia is provided by the PdxT subunit. Can also use ribulose 5-phosphate and dihydroxyacetone phosphate as substrates, resulting from enzyme-catalyzed isomerization of RBP and G3P, respectively. In Geobacillus kaustophilus (strain HTA426), this protein is Pyridoxal 5'-phosphate synthase subunit PdxS.